The chain runs to 169 residues: Ureidoglycolate lyase (169 aa).

Belongs to the ureidoglycolate lyase family. As to quaternary structure, homodimer. Ni(2+) is required as a cofactor.

The enzyme catalyses (S)-ureidoglycolate = urea + glyoxylate. The protein operates within nitrogen metabolism; (S)-allantoin degradation. In terms of biological role, catalyzes the catabolism of the allantoin degradation intermediate (S)-ureidoglycolate, generating urea and glyoxylate. Involved in the utilization of allantoin as nitrogen source. The chain is Ureidoglycolate lyase from Brucella ovis (strain ATCC 25840 / 63/290 / NCTC 10512).